The following is a 499-amino-acid chain: D-alanine--D-alanyl carrier protein ligase (499 aa).

Residue 152–153 (TS) participates in ATP binding. Residue D197 coordinates D-alanine. ATP-binding positions include 292–297 (NTYGPT), D372, 384–387 (YQGR), and K485. K485 serves as a coordination point for D-alanine.

It belongs to the ATP-dependent AMP-binding enzyme family. DltA subfamily.

The protein localises to the cytoplasm. The catalysed reaction is holo-[D-alanyl-carrier protein] + D-alanine + ATP = D-alanyl-[D-alanyl-carrier protein] + AMP + diphosphate. It participates in cell wall biogenesis; lipoteichoic acid biosynthesis. In terms of biological role, catalyzes the first step in the D-alanylation of lipoteichoic acid (LTA), the activation of D-alanine and its transfer onto the D-alanyl carrier protein (Dcp) DltC. In an ATP-dependent two-step reaction, forms a high energy D-alanyl-AMP intermediate, followed by transfer of the D-alanyl residue as a thiol ester to the phosphopantheinyl prosthetic group of the Dcp. D-alanylation of LTA plays an important role in modulating the properties of the cell wall in Gram-positive bacteria, influencing the net charge of the cell wall. The sequence is that of D-alanine--D-alanyl carrier protein ligase from Lactococcus lactis subsp. lactis (strain IL1403) (Streptococcus lactis).